We begin with the raw amino-acid sequence, 139 residues long: HTH-type transcriptional regulator MntR (139 aa).

The HTH dtxR-type domain maps to methionine 1–threonine 63. Mn(2+)-binding residues include aspartate 8, glutamate 11, histidine 77, glutamate 99, glutamate 102, and histidine 103.

This sequence belongs to the DtxR/MntR family. In terms of assembly, homodimer.

It localises to the cytoplasm. Its activity is regulated as follows. DNA binding is strongly activated by Mn(2+). In terms of biological role, central regulator of manganese homeostasis. This chain is HTH-type transcriptional regulator MntR, found in Lysinibacillus sphaericus (strain C3-41).